We begin with the raw amino-acid sequence, 428 residues long: Enolase (428 aa).

Position 163 (Q163) interacts with (2R)-2-phosphoglycerate. The Proton donor role is filled by E205. Mg(2+) contacts are provided by D242, E285, and D311. Positions 336, 365, 366, and 387 each coordinate (2R)-2-phosphoglycerate. Catalysis depends on K336, which acts as the Proton acceptor.

The protein belongs to the enolase family. The cofactor is Mg(2+).

Its subcellular location is the cytoplasm. The protein resides in the secreted. It is found in the cell surface. The catalysed reaction is (2R)-2-phosphoglycerate = phosphoenolpyruvate + H2O. It participates in carbohydrate degradation; glycolysis; pyruvate from D-glyceraldehyde 3-phosphate: step 4/5. Catalyzes the reversible conversion of 2-phosphoglycerate (2-PG) into phosphoenolpyruvate (PEP). It is essential for the degradation of carbohydrates via glycolysis. In Desulfatibacillum aliphaticivorans, this protein is Enolase.